The sequence spans 463 residues: Asparagine--tRNA ligase (463 aa).

Belongs to the class-II aminoacyl-tRNA synthetase family. In terms of assembly, homodimer.

It is found in the cytoplasm. It carries out the reaction tRNA(Asn) + L-asparagine + ATP = L-asparaginyl-tRNA(Asn) + AMP + diphosphate + H(+). The sequence is that of Asparagine--tRNA ligase from Nostoc sp. (strain PCC 7120 / SAG 25.82 / UTEX 2576).